Consider the following 255-residue polypeptide: 5'-nucleotidase SurE (255 aa).

4 residues coordinate a divalent metal cation: aspartate 8, aspartate 9, serine 40, and asparagine 93.

It belongs to the SurE nucleotidase family. Requires a divalent metal cation as cofactor.

It localises to the cytoplasm. The catalysed reaction is a ribonucleoside 5'-phosphate + H2O = a ribonucleoside + phosphate. Its function is as follows. Nucleotidase that shows phosphatase activity on nucleoside 5'-monophosphates. In Azorhizobium caulinodans (strain ATCC 43989 / DSM 5975 / JCM 20966 / LMG 6465 / NBRC 14845 / NCIMB 13405 / ORS 571), this protein is 5'-nucleotidase SurE.